The primary structure comprises 89 residues: Large ribosomal subunit protein bL27 (89 aa).

Residues 1-26 (MATKKAGGSSKNGRDSAGRRLGLKKT) are disordered.

It belongs to the bacterial ribosomal protein bL27 family.

This chain is Large ribosomal subunit protein bL27, found in Orientia tsutsugamushi (strain Boryong) (Rickettsia tsutsugamushi).